A 443-amino-acid chain; its full sequence is Xaa-Pro dipeptidase (443 aa).

Asp246, Asp257, His339, Glu384, and Glu423 together coordinate Mn(2+).

This sequence belongs to the peptidase M24B family. Bacterial-type prolidase subfamily. Requires Mn(2+) as cofactor.

The catalysed reaction is Xaa-L-Pro dipeptide + H2O = an L-alpha-amino acid + L-proline. Its function is as follows. Splits dipeptides with a prolyl residue in the C-terminal position. The protein is Xaa-Pro dipeptidase of Edwardsiella ictaluri (strain 93-146).